We begin with the raw amino-acid sequence, 138 residues long: Large ribosomal subunit protein uL16 (138 aa).

Over residues 1–15 the composition is skewed to basic residues; the sequence is MLSPRKVKYRKKQRG. The disordered stretch occupies residues 1 to 21; it reads MLSPRKVKYRKKQRGRLSGEA.

It belongs to the universal ribosomal protein uL16 family. Part of the 50S ribosomal subunit.

In terms of biological role, binds 23S rRNA and is also seen to make contacts with the A and possibly P site tRNAs. This is Large ribosomal subunit protein uL16 from Borrelia duttonii (strain Ly).